Reading from the N-terminus, the 126-residue chain is Protein LiaI (126 aa).

2 helical membrane-spanning segments follow: residues 11–31 and 56–76; these read FLLI…GFII and IIVG…VVGI.

The protein localises to the cell membrane. This chain is Protein LiaI (liaI), found in Bacillus subtilis (strain 168).